Reading from the N-terminus, the 239-residue chain is uncharacterized protein (239 aa).

The next 3 helical transmembrane spans lie at 125 to 144 (LAIISFICSPSLSFFLLILY), 149 to 171 (IFVLFKLFAVEYVRYELVYFLFL), and 197 to 216 (SVLNLSVSVTILAVLQGILF).

The protein localises to the cell membrane. This is an uncharacterized protein from Aquifex aeolicus (strain VF5).